A 1149-amino-acid chain; its full sequence is MSRYMQRPENALKRANEFIEVGKPARALDTLQEVFRIKKWTYTWSEAVIEPIMFKYLDLCVELKKSHIAKEGLFQYRNMFQMLNVGSLENVIRGYLKMAEERTEAAQQQSSQAILDIDDLDNLATPESILMSAVCGEDAQDRSDRTILLPWVKFLWESYGQCLELLKVNSHCENLYHDIAKMAFAFCLKYNRKMEFRKLCEKLRKHLDDISKVSSQTANVSISKPETQQLNLDTRLNQLDCAIQMELWLEAYKAIEDIHGLMTLSKKTPMPKTMALYYQKLAMVFWKAGNQLFHAAALLKLFQLSRDMKKNVTQEEIQRMTSHVLIATLAIPLPSAHPEFDRFIETDKSPLEKAQKLAVLLGLQQPPSRVSLLKEVLRLNVLQLAAPQFQNLYKWLEVEFDPLNLCSRVQGVIEEITADENSPYTQYTQALQDVTLVRLVRQVSQVYQSIEFSRFLSLAKFANSFYLERILVDCVRHNDMQITIDHRNHSVHFGTDLSESQREDHPDGPTLQSMPSEQVRSQLVNMSVVLHRAIATINPNRKKADRERLRNQMVKNYEENMVKDHQRILQRQKKIEDRKEYIERVNLEREELEQRQLEEAARQQKLAEMRRLEQENEERERKRHENEIQMIKERNMKDKIDQIKQSASGQKLLKKIDEEDIKKMNAEEIAAKEAEERQKERKAHDNNLKSQEKKIDYFERAKRLEEIPLIEKYLEDKLVQDKEFWEKQEASRIEAAIAERKNAEQVQERLRRMQADRDVFWQKLKGERSNAFAEKLKVFNAALEEERRRRLAERVIQRREERRQKWLREKEEERRRIEEELRKQREEEERIERERRAEERRIENEKQRVIMEKQRAKEEEIERKLAEEKERLKERAPRGEKEERGGGGGGGGAWRGRGDTAAPAESAAKPESDWRNAREAREPAPESAGASSAAAPAPKKDGVWQPSGRFREGRGAPGADRPPRGDDREPPAAAAGESKWRRGGGGADDDKDDGPRPRVGAGDRGPMRRGDGDRDDRGPMRRGDRPPMRDGDRPGMRRDDRGDRREGGAPDRRDFGGRGGDRRDDRRDDRGPRREGGGERGGDVWRRAPQEDRRGGAAGGESGGNWRNARQAEPAKPREERRGGEERPKEARAAAGPDEDGWTDVKHHR.

In terms of domain architecture, PCI spans 317–498 (IQRMTSHVLI…HSVHFGTDLS (182 aa)). Disordered stretches follow at residues 496–515 (DLSE…QSMP) and 811–1149 (EEER…KHHR). The segment covering 811–885 (EEERRRIEEE…APRGEKEERG (75 aa)) has biased composition (basic and acidic residues). The segment covering 886–895 (GGGGGGGAWR) has biased composition (gly residues). The span at 908–924 (AKPESDWRNAREAREPA) shows a compositional bias: basic and acidic residues. Residues 925 to 937 (PESAGASSAAAPA) show a composition bias toward low complexity. Basic and acidic residues-rich tracts occupy residues 961 to 970 (RPPRGDDREP), 1005 to 1095 (GPMR…DRRG), and 1113 to 1132 (EPAK…KEAR).

It belongs to the eIF-3 subunit A family. As to quaternary structure, component of the eukaryotic translation initiation factor 3 (eIF-3) complex.

It localises to the cytoplasm. In terms of biological role, RNA-binding component of the eukaryotic translation initiation factor 3 (eIF-3) complex, which is involved in protein synthesis of a specialized repertoire of mRNAs and, together with other initiation factors, stimulates binding of mRNA and methionyl-tRNAi to the 40S ribosome. The eIF-3 complex specifically targets and initiates translation of a subset of mRNAs involved in cell proliferation. This chain is Eukaryotic translation initiation factor 3 subunit A, found in Culex quinquefasciatus (Southern house mosquito).